The primary structure comprises 111 residues: uncharacterized protein (111 aa).

This sequence to M.tuberculosis Rv1271c.

This is an uncharacterized protein from Mycobacterium bovis (strain ATCC BAA-935 / AF2122/97).